A 151-amino-acid polypeptide reads, in one-letter code: Putative pre-16S rRNA nuclease (151 aa).

Belongs to the YqgF nuclease family.

It localises to the cytoplasm. Could be a nuclease involved in processing of the 5'-end of pre-16S rRNA. This Bifidobacterium adolescentis (strain ATCC 15703 / DSM 20083 / NCTC 11814 / E194a) protein is Putative pre-16S rRNA nuclease.